A 333-amino-acid chain; its full sequence is Phenylalanine--tRNA ligase alpha subunit (333 aa).

Glu-254 serves as a coordination point for Mg(2+).

It belongs to the class-II aminoacyl-tRNA synthetase family. Phe-tRNA synthetase alpha subunit type 1 subfamily. In terms of assembly, tetramer of two alpha and two beta subunits. It depends on Mg(2+) as a cofactor.

Its subcellular location is the cytoplasm. The enzyme catalyses tRNA(Phe) + L-phenylalanine + ATP = L-phenylalanyl-tRNA(Phe) + AMP + diphosphate + H(+). The chain is Phenylalanine--tRNA ligase alpha subunit from Xylella fastidiosa (strain M23).